The following is a 332-amino-acid chain: Biotin synthase (332 aa).

In terms of domain architecture, Radical SAM core spans 53–282 (YFGKKVKLNM…TKEIRISGGR (230 aa)). The [4Fe-4S] cluster site is built by cysteine 71, cysteine 75, and cysteine 78. [2Fe-2S] cluster-binding residues include cysteine 115, cysteine 147, cysteine 207, and arginine 277.

This sequence belongs to the radical SAM superfamily. Biotin synthase family. Homodimer. It depends on [4Fe-4S] cluster as a cofactor. Requires [2Fe-2S] cluster as cofactor.

The enzyme catalyses (4R,5S)-dethiobiotin + (sulfur carrier)-SH + 2 reduced [2Fe-2S]-[ferredoxin] + 2 S-adenosyl-L-methionine = (sulfur carrier)-H + biotin + 2 5'-deoxyadenosine + 2 L-methionine + 2 oxidized [2Fe-2S]-[ferredoxin]. It participates in cofactor biosynthesis; biotin biosynthesis; biotin from 7,8-diaminononanoate: step 2/2. Functionally, catalyzes the conversion of dethiobiotin (DTB) to biotin by the insertion of a sulfur atom into dethiobiotin via a radical-based mechanism. This is Biotin synthase from Bacillus anthracis.